Consider the following 225-residue polypeptide: MGKYLRSSCKQQQQPSSPAAVASVAAAAVSSYSYLTLRSGRRVPAAAAAAGGSACRRRHRRGGRRGCAKNGAGSARACGARSPTSSASSGQRRRCEAVECSHGGGRAELSRSPPLGNSVVVVSGDVVSGERKSLKPNSCSREVAAEHAGEHKHNPAAAAAAGRRPPLSPPEAEIEAFFAAAELAERRRFAEKYNYDIALDRPLQGRYEWEPTVPNFDVAKDVTDM.

Disordered regions lie at residues 47–94 (AAAA…QRRR) and 130–169 (ERKSLKPNSCSREVAAEHAGEHKHNPAAAAAAGRRPPLSP). Residues 55–67 (CRRRHRRGGRRGC) are compositionally biased toward basic residues. Residues 71–82 (GAGSARACGARS) are compositionally biased toward low complexity. Positions 143 to 153 (VAAEHAGEHKH) are enriched in basic and acidic residues.

This sequence belongs to the CDI family. ICK/KRP subfamily.

The polypeptide is Cyclin-dependent kinase inhibitor 3 (KRP3) (Oryza sativa subsp. japonica (Rice)).